The following is a 171-amino-acid chain: Inosine/xanthosine triphosphatase (171 aa).

8-13 (TTNPAK) lines the substrate pocket. Residues Glu-38 and Gln-68 each coordinate Mg(2+).

The protein belongs to the YjjX NTPase family. In terms of assembly, homodimer. It depends on Mg(2+) as a cofactor. Mn(2+) is required as a cofactor.

It catalyses the reaction XTP + H2O = XDP + phosphate + H(+). It carries out the reaction ITP + H2O = IDP + phosphate + H(+). In terms of biological role, phosphatase that hydrolyzes non-canonical purine nucleotides such as XTP and ITP to their respective diphosphate derivatives. Probably excludes non-canonical purines from DNA/RNA precursor pool, thus preventing their incorporation into DNA/RNA and avoiding chromosomal lesions. This chain is Inosine/xanthosine triphosphatase, found in Citrobacter koseri (strain ATCC BAA-895 / CDC 4225-83 / SGSC4696).